The sequence spans 70 residues: Brevinin-1Vb (70 aa).

An N-terminal signal peptide occupies residues 1 to 22; that stretch reads MFTLKKSLLLLFFLGTINLSLC. Residues 23-44 constitute a propeptide that is removed on maturation; sequence EEERNAEEERRDEPDEMNVEVE. C64 and C70 are disulfide-bonded.

In terms of tissue distribution, expressed by the skin glands.

The protein resides in the secreted. Antimicrobial peptide. The protein is Brevinin-1Vb of Odorrana versabilis (Chinese bamboo leaf odorous frog).